Reading from the N-terminus, the 123-residue chain is Large ribosomal subunit protein bL19 (123 aa).

It belongs to the bacterial ribosomal protein bL19 family.

In terms of biological role, this protein is located at the 30S-50S ribosomal subunit interface and may play a role in the structure and function of the aminoacyl-tRNA binding site. The chain is Large ribosomal subunit protein bL19 from Thermomicrobium roseum (strain ATCC 27502 / DSM 5159 / P-2).